Reading from the N-terminus, the 75-residue chain is Cytoplasmic envelopment protein 3 (75 aa).

A lipid anchor (N-myristoyl glycine; by host) is attached at Gly2. Over residues 53–65 the composition is skewed to acidic residues; it reads EGLEYDEDSENDE. The interval 53–75 is disordered; sequence EGLEYDEDSENDELLFLPNKKPN.

The protein belongs to the herpesviridae cytoplasmic envelopment protein 3 family. In terms of assembly, interacts with BGLF2; this interaction is essential for the proper localization of each protein to the assembly complex and thus for the production of infectious virus. Post-translationally, myristoylation and palmitoylation (probably on one or more of the nearby cysteines at the N-terminus) enable membrane-binding and Golgi apparatus-specific targeting and are essential for efficient packaging. In terms of processing, phosphorylated. Phosphorylation does not seem to be required for recycling to the host Golgi apparatus. Packaging is selective for underphosphorylated forms.

Its subcellular location is the virion tegument. The protein localises to the virion membrane. It localises to the host cell membrane. The protein resides in the host Golgi apparatus membrane. Functionally, plays an important role in the cytoplasmic envelopment of tegument proteins and capsids during the assembly and egress processes. Also participates in viral entry at the fusion step probably by regulating the core fusion machinery. This is Cytoplasmic envelopment protein 3 from Homo sapiens (Human).